Here is a 297-residue protein sequence, read N- to C-terminus: MLVLSIRIKVWQTMESEITKRIVVPELEDILYKEHKVLDKGFVRLVDYMGSDESVVQAARISYGRGTKSVSQDAALINYLMRHSHTTPFEMCEIKFHIKLPIFVARQWVRHRTANVNEYSARYSVLDHEFYIPELDHVATQSEDNAQGRGNSLSNEDAQYVTDLLKRDSDMVYETYNKFLIKGVSREISRISLTLNYYTEWYWKIDLHNLLHFLRLRSDVHAQYEIRVYAETMLEIVKKWVPLTYAAFVEYCLESQSFSKSALSVVKKLIAGEDVAREDTGIGKREWRELMDVLADK.

The region spanning 41 to 251 (GFVRLVDYMG…PLTYAAFVEY (211 aa)) is the ThyX domain. FAD is bound by residues Thr-87, 110–112 (RHR), and Glu-118. DUMP is bound by residues 107-110 (QWVR), 118-122 (EYSAR), and Arg-190. Residues 110–120 (RHRTANVNEYS) carry the ThyX motif motif. FAD-binding positions include 206 to 208 (DLH) and His-212. Arg-217 serves as a coordination point for dUMP. Residue Arg-217 is the Involved in ionization of N3 of dUMP, leading to its activation of the active site.

It belongs to the thymidylate synthase ThyX family. Homotetramer. Requires FAD as cofactor.

It catalyses the reaction dUMP + (6R)-5,10-methylene-5,6,7,8-tetrahydrofolate + NADPH + H(+) = dTMP + (6S)-5,6,7,8-tetrahydrofolate + NADP(+). It functions in the pathway pyrimidine metabolism; dTTP biosynthesis. In terms of biological role, catalyzes the reductive methylation of 2'-deoxyuridine-5'-monophosphate (dUMP) to 2'-deoxythymidine-5'-monophosphate (dTMP) while utilizing 5,10-methylenetetrahydrofolate (mTHF) as the methyl donor, and NADPH and FADH(2) as the reductant. This Ehrlichia ruminantium (strain Gardel) protein is Flavin-dependent thymidylate synthase.